The sequence spans 116 residues: NADH-ubiquinone oxidoreductase chain 3 (116 aa).

3 helical membrane passes run 3 to 23 (LITTIIAITITLSAVLATVSF), 56 to 76 (FFLIAILFLLFDLEIALLLPL), and 85 to 105 (PALTLAWSAAVLALLTLGLIY).

This sequence belongs to the complex I subunit 3 family.

Its subcellular location is the mitochondrion membrane. The enzyme catalyses a ubiquinone + NADH + 5 H(+)(in) = a ubiquinol + NAD(+) + 4 H(+)(out). In terms of biological role, core subunit of the mitochondrial membrane respiratory chain NADH dehydrogenase (Complex I) that is believed to belong to the minimal assembly required for catalysis. Complex I functions in the transfer of electrons from NADH to the respiratory chain. The immediate electron acceptor for the enzyme is believed to be ubiquinone. The polypeptide is NADH-ubiquinone oxidoreductase chain 3 (MT-ND3) (Salmo trutta (Brown trout)).